Here is an 865-residue protein sequence, read N- to C-terminus: Leucine--tRNA ligase (865 aa).

The 'HIGH' region signature appears at 36-46 (PYPSGKIHMGH). The short motif at 608–612 (KMSKS) is the 'KMSKS' region element. Lys611 is a binding site for ATP.

Belongs to the class-I aminoacyl-tRNA synthetase family.

Its subcellular location is the cytoplasm. It catalyses the reaction tRNA(Leu) + L-leucine + ATP = L-leucyl-tRNA(Leu) + AMP + diphosphate. The polypeptide is Leucine--tRNA ligase (Wolbachia sp. subsp. Brugia malayi (strain TRS)).